We begin with the raw amino-acid sequence, 591 residues long: PDZ and LIM domain protein 5 (591 aa).

N-acetylserine is present on Ser-2. Residue Ser-2 is modified to Phosphoserine. One can recognise a PDZ domain in the interval 2 to 85 (SNYSVSLVGP…SLNMTLQRAS (84 aa)). Lys-89 is subject to N6-acetyllysine; alternate. Position 89 is an N6-succinyllysine; alternate (Lys-89). Residue Lys-89 forms a Glycyl lysine isopeptide (Lys-Gly) (interchain with G-Cter in SUMO2); alternate linkage. 5 positions are modified to phosphoserine: Glu-102, Lys-105, Ser-111, Ser-134, and Ser-137. Disordered regions lie at residues 121 to 166 (TNMA…PTPV) and 186 to 398 (SADQ…DQDT). Polar residues predominate over residues 134–143 (SVSSPKVTSI). Residues 144–166 (PSPSSAFTPAHAATSSHASPTPV) show a composition bias toward low complexity. Polar residues-rich tracts occupy residues 186–195 (SADQCSSPPN) and 205–217 (RQPT…SESA). A phosphoserine mark is found at Gln-218, Ser-228, and Ser-260. 2 stretches are compositionally biased toward basic and acidic residues: residues 258–273 (DASK…DWRP) and 294–304 (HLTESENDNTK). Over residues 310 to 339 (QEPSQQPASSGASPLSASEGPESPGSSRPS) the composition is skewed to low complexity. A phosphoserine mark is found at Ser-313, Pro-316, and Ser-322. Position 350 is an N6-acetyllysine (Lys-350). Over residues 353–385 (GSTSVKSPSWQRPNQAAPSTGRISNNARSSGTG) the composition is skewed to polar residues. A phosphoserine mark is found at Ser-359 and Ser-361. 3 consecutive LIM zinc-binding domains span residues 413–472 (PMCA…FFAP), 472–531 (PECG…LFGT), and 531–591 (TICR…SVNF).

Interacts with various PKC isoforms through the LIM domains. Interacts with actin and alpha-actinin through the PDZ domain. Interacts (via LIM domains) with SIPA1L1/SPAR; this interaction may occur preferentially with isoform 1.

The protein localises to the postsynaptic density. It localises to the presynapse. The protein resides in the postsynapse. Its subcellular location is the cytoplasm. It is found in the cytosol. Functionally, may play an important role in the heart development by scaffolding PKC to the Z-disk region. May play a role in the regulation of cardiomyocyte expansion. Isoforms lacking the LIM domains may negatively modulate the scaffolding activity of isoform 1. Overexpression promotes the development of heart hypertrophy. Contributes to the regulation of dendritic spine morphogenesis in neurons. May be required to restrain postsynaptic growth of excitatory synapses. Isoform 1, but not isoform 2, expression favors spine thinning and elongation. In Mus musculus (Mouse), this protein is PDZ and LIM domain protein 5.